Consider the following 360-residue polypeptide: DNA polymerase IV (360 aa).

Residues Val8 to Gly191 form the UmuC domain. Asp12 and Asp110 together coordinate Mg(2+). Residue Glu111 is part of the active site.

This sequence belongs to the DNA polymerase type-Y family. As to quaternary structure, monomer. Requires Mg(2+) as cofactor.

The protein resides in the cytoplasm. It catalyses the reaction DNA(n) + a 2'-deoxyribonucleoside 5'-triphosphate = DNA(n+1) + diphosphate. Functionally, poorly processive, error-prone DNA polymerase involved in untargeted mutagenesis. Copies undamaged DNA at stalled replication forks, which arise in vivo from mismatched or misaligned primer ends. These misaligned primers can be extended by PolIV. Exhibits no 3'-5' exonuclease (proofreading) activity. May be involved in translesional synthesis. This is DNA polymerase IV from Methanoculleus marisnigri (strain ATCC 35101 / DSM 1498 / JR1).